Here is a 178-residue protein sequence, read N- to C-terminus: dCTP deaminase (178 aa).

DCTP is bound by residues 99 to 104 and Asp115; that span reads RSTWAR. Catalysis depends on Glu125, which acts as the Proton donor/acceptor. Residues Tyr157 and Gln164 each coordinate dCTP.

This sequence belongs to the dCTP deaminase family. In terms of assembly, homotrimer.

It catalyses the reaction dCTP + H2O + H(+) = dUTP + NH4(+). Its pathway is pyrimidine metabolism; dUMP biosynthesis; dUMP from dCTP (dUTP route): step 1/2. Functionally, catalyzes the deamination of dCTP to dUTP. This is dCTP deaminase from Aeropyrum pernix (strain ATCC 700893 / DSM 11879 / JCM 9820 / NBRC 100138 / K1).